We begin with the raw amino-acid sequence, 318 residues long: GTP 3',8-cyclase (318 aa).

A Radical SAM core domain is found at 5–217 (KFERKIDYIR…DKIAKKYKFK (213 aa)). Position 14 (Arg14) interacts with GTP. [4Fe-4S] cluster is bound by residues Cys21 and Cys25. Tyr27 is an S-adenosyl-L-methionine binding site. Cys28 lines the [4Fe-4S] cluster pocket. Arg64 serves as a coordination point for GTP. Residue Gly68 coordinates S-adenosyl-L-methionine. Thr95 contacts GTP. Ser119 is an S-adenosyl-L-methionine binding site. Lys155 contacts GTP. Position 189 (Met189) interacts with S-adenosyl-L-methionine. Residues Cys248 and Cys251 each coordinate [4Fe-4S] cluster. 253 to 255 (RIR) contributes to the GTP binding site. Residue Cys265 coordinates [4Fe-4S] cluster.

The protein belongs to the radical SAM superfamily. MoaA family. As to quaternary structure, monomer and homodimer. The cofactor is [4Fe-4S] cluster.

The catalysed reaction is GTP + AH2 + S-adenosyl-L-methionine = (8S)-3',8-cyclo-7,8-dihydroguanosine 5'-triphosphate + 5'-deoxyadenosine + L-methionine + A + H(+). Its pathway is cofactor biosynthesis; molybdopterin biosynthesis. Functionally, catalyzes the cyclization of GTP to (8S)-3',8-cyclo-7,8-dihydroguanosine 5'-triphosphate. This chain is GTP 3',8-cyclase, found in Nautilia profundicola (strain ATCC BAA-1463 / DSM 18972 / AmH).